A 447-amino-acid chain; its full sequence is Chitobiosyldiphosphodolichol beta-mannosyltransferase (447 aa).

Topologically, residues 1–2 (MT) are cytoplasmic. The chain crosses the membrane as a helical; Signal-anchor for type II membrane protein span at residues 3 to 23 (LVLLLSIFAICFSSVAFIQLL). Over 24–447 (PTRREKKSSE…IAGTFLGLVT (424 aa)) the chain is Lumenal.

This sequence belongs to the glycosyltransferase group 1 family. Glycosyltransferase 33 subfamily.

It localises to the endoplasmic reticulum membrane. It catalyses the reaction an N,N'-diacetylchitobiosyl-diphospho-di-trans,poly-cis-dolichol + GDP-alpha-D-mannose = a beta-D-Man-(1-&gt;4)-beta-D-GlcNAc-(1-&gt;4)-alpha-D-GlcNAc-diphospho-di-trans,poly-cis-dolichol + GDP + H(+). It participates in protein modification; protein glycosylation. Functionally, participates in the formation of the lipid-linked precursor oligosaccharide for N-glycosylation. Involved in assembling the dolichol-pyrophosphate-GlcNAc(2)-Man(5) intermediate on the cytoplasmic surface of the ER. This chain is Chitobiosyldiphosphodolichol beta-mannosyltransferase, found in Arthroderma benhamiae (strain ATCC MYA-4681 / CBS 112371) (Trichophyton mentagrophytes).